The primary structure comprises 353 residues: Melanin-concentrating hormone receptor 1 (353 aa).

Positions 1-28 (MDLEASLLPTGPNASNTSDGPDNLTSAG) are disordered. Topologically, residues 1 to 45 (MDLEASLLPTGPNASNTSDGPDNLTSAGPPPRTGSISYVNIIMPS) are extracellular. Polar residues predominate over residues 12-26 (PNASNTSDGPDNLTS). Residues Asn13, Asn16, and Asn23 are each glycosylated (N-linked (GlcNAc...) asparagine). The helical transmembrane segment at 46 to 66 (VFGTICLLGIIGNSMVIFAVV) threads the bilayer. Residues 67–79 (KKSKLHWFSNVPD) lie on the Cytoplasmic side of the membrane. A helical transmembrane segment spans residues 80–100 (IFIINLSVVDLLFLLGMPFMI). At 101–116 (HQLMGNGVWHFGETMC) the chain is on the extracellular side. An intrachain disulfide couples Cys116 to Cys194. A helical membrane pass occupies residues 117–139 (TLITAMDANSQFTSTYILTAMAI). At 140 to 161 (DRYLATVHPISSTRFRKPSVAT) the chain is on the cytoplasmic side. The helical transmembrane segment at 162-182 (LVICLLWALSIISITPVWLYA) threads the bilayer. The Extracellular portion of the chain corresponds to 183-204 (RLIPFPGGTVGCGIRLPNPDTD). A helical transmembrane segment spans residues 205–225 (LYWFTLYQFFLAFALPFVVIT). The Cytoplasmic portion of the chain corresponds to 226–256 (AAYVRILQRMTSSVAPASQRSIRLRTKRVTR). A helical transmembrane segment spans residues 257–277 (TAIAICLVFFVCWAPYYVLQL). Residues 278 to 294 (TQLSISRPTLTFVYLYN) lie on the Extracellular side of the membrane. Residues 295-315 (AAISLGYANSCLNPFVYIVLC) traverse the membrane as a helical segment. The Cytoplasmic segment spans residues 316 to 353 (ETFRKRLVLSVKPAAQGQLRAVSNAQTAEEERTESKGT).

The protein belongs to the G-protein coupled receptor 1 family. In terms of assembly, interacts with NCDN.

The protein resides in the cell membrane. Functionally, receptor for melanin-concentrating hormone, coupled to both G proteins that inhibit adenylyl cyclase and G proteins that activate phosphoinositide hydrolysis. In Sus scrofa (Pig), this protein is Melanin-concentrating hormone receptor 1.